The chain runs to 147 residues: D-aminoacyl-tRNA deacylase (147 aa).

The short motif at glycine 137–proline 138 is the Gly-cisPro motif, important for rejection of L-amino acids element.

Belongs to the DTD family. As to quaternary structure, homodimer.

It localises to the cytoplasm. It carries out the reaction glycyl-tRNA(Ala) + H2O = tRNA(Ala) + glycine + H(+). The enzyme catalyses a D-aminoacyl-tRNA + H2O = a tRNA + a D-alpha-amino acid + H(+). An aminoacyl-tRNA editing enzyme that deacylates mischarged D-aminoacyl-tRNAs. Also deacylates mischarged glycyl-tRNA(Ala), protecting cells against glycine mischarging by AlaRS. Acts via tRNA-based rather than protein-based catalysis; rejects L-amino acids rather than detecting D-amino acids in the active site. By recycling D-aminoacyl-tRNA to D-amino acids and free tRNA molecules, this enzyme counteracts the toxicity associated with the formation of D-aminoacyl-tRNA entities in vivo and helps enforce protein L-homochirality. The chain is D-aminoacyl-tRNA deacylase from Bacillus velezensis (strain DSM 23117 / BGSC 10A6 / LMG 26770 / FZB42) (Bacillus amyloliquefaciens subsp. plantarum).